The sequence spans 181 residues: Small ribosomal subunit protein bS16 (181 aa).

Residues 150–181 form a disordered region; the sequence is KKAAEEAAKAAAEAPAEEAAPAEEAATEAAAE. A compositionally biased stretch (low complexity) spans 158-181; the sequence is KAAAEAPAEEAAPAEEAATEAAAE.

This sequence belongs to the bacterial ribosomal protein bS16 family.

The sequence is that of Small ribosomal subunit protein bS16 from Bacteroides fragilis (strain ATCC 25285 / DSM 2151 / CCUG 4856 / JCM 11019 / LMG 10263 / NCTC 9343 / Onslow / VPI 2553 / EN-2).